Here is a 216-residue protein sequence, read N- to C-terminus: Nicotinamidase (216 aa).

Asp-8 is an active-site residue. Positions 51, 53, and 94 each coordinate Zn(2+). The active site involves Lys-122. Catalysis depends on Cys-167, which acts as the Nucleophile.

It belongs to the isochorismatase family.

The protein resides in the cytoplasm. Its subcellular location is the nucleus. It is found in the peroxisome. The catalysed reaction is nicotinamide + H2O = nicotinate + NH4(+). It functions in the pathway cofactor biosynthesis; nicotinate biosynthesis; nicotinate from nicotinamide: step 1/1. Inhibited by N-ethylmaleimide, HgCl(2) and PCMB. Competitively inhibited by NAD, NMN and 3-acetylpyridine. In terms of biological role, catalyzes the deamidation of nicotinamide, an early step in the NAD(+) salvage pathway. Positively regulates SIR2-mediated silencing and longevity by preventing the accumulation of intracellular nicotinamide, an inhibitor of SIR2, during times of stress. Also acts on nicotinyl hydroxamate. The sequence is that of Nicotinamidase (PNC1) from Saccharomyces cerevisiae (strain ATCC 204508 / S288c) (Baker's yeast).